We begin with the raw amino-acid sequence, 746 residues long: Proline--tRNA ligase (746 aa).

The segment at 1–223 is required for editing of incorrectly charged tRNA; the sequence is MNNNTNGEII…NSNNNNNNNN (223 aa). Over residues 181 to 201 the composition is skewed to basic and acidic residues; it reads TSKARVDKKEDVQEEMAKNEE. The tract at residues 181-226 is disordered; it reads TSKARVDKKEDVQEEMAKNEELQNNNNNNKNNSNSNNNNNNNNNHI. Over residues 204–224 the composition is skewed to low complexity; that stretch reads NNNNNNKNNSNSNNNNNNNNN. Arginine 390 provides a ligand contact to L-proline. Residues 390–394, 401–405, and 475–477 each bind ATP; these read RWEFK, RTREF, and QAA. Histidine 480 is a binding site for L-proline. 512 to 514 serves as a coordination point for ATP; sequence TTR.

Belongs to the class-II aminoacyl-tRNA synthetase family. ProS type 3 subfamily. Homodimer.

It localises to the cytoplasm. It carries out the reaction tRNA(Pro) + L-proline + ATP = L-prolyl-tRNA(Pro) + AMP + diphosphate. Its activity is regulated as follows. Inhibited by the quinazolinone-based compound febrifugine from the Chinese plant Dichroa febrifuga which is used to treat malaria-associated fever. Also inhibited by febrifugine derivatives such as halofuginone. In terms of biological role, catalyzes the attachment of proline to tRNA(Pro) in a two-step reaction: proline is first activated by ATP to form Pro-AMP and then transferred to the acceptor end of tRNA(Pro). Functions in trans to edit the amino acid moiety from incorrectly charged Ala-tRNA(Pro). Has no activity on correctly charged Pro-tRNA(Pro) or Ala-tRNA(Ala). The polypeptide is Proline--tRNA ligase (Plasmodium falciparum (isolate 3D7)).